Consider the following 157-residue polypeptide: Protein E6 (157 aa).

Zinc fingers lie at residues 39-75 and 112-148; these read CNFC…CRSC and CQTC…CRQC.

Belongs to the papillomaviridae E6 protein family. Forms homodimers. Interacts with ubiquitin-protein ligase UBE3A/E6-AP; this interaction stimulates UBE3A ubiquitin activity. Interacts with host BAK1.

It localises to the host cytoplasm. It is found in the host nucleus. Functionally, plays a major role in the induction and maintenance of cellular transformation. E6 associates with host UBE3A/E6-AP ubiquitin-protein ligase and modulates its activity. Protects host keratinocytes from apoptosis by mediating the degradation of host BAK1. May also inhibit host immune response. This Homo sapiens (Human) protein is Protein E6.